The sequence spans 367 residues: Aminomethyltransferase (367 aa).

The protein belongs to the GcvT family. In terms of assembly, the glycine cleavage system is composed of four proteins: P, T, L and H.

The catalysed reaction is N(6)-[(R)-S(8)-aminomethyldihydrolipoyl]-L-lysyl-[protein] + (6S)-5,6,7,8-tetrahydrofolate = N(6)-[(R)-dihydrolipoyl]-L-lysyl-[protein] + (6R)-5,10-methylene-5,6,7,8-tetrahydrofolate + NH4(+). In terms of biological role, the glycine cleavage system catalyzes the degradation of glycine. This Parasynechococcus marenigrum (strain WH8102) protein is Aminomethyltransferase.